Here is a 1976-residue protein sequence, read N- to C-terminus: Myosin-10 (1976 aa).

Arginine 18 carries the post-translational modification Omega-N-methylarginine. Residues 31–81 enclose the Myosin N-terminal SH3-like domain; it reads TAKKLVWIPSERHGFEAASIKEERGDEVLVELAENGKKAMVNKDDIQKMNP. The Myosin motor domain occupies 85 to 783; sequence SKVEDMAELT…VLAHLEEERD (699 aa). 178 to 185 is a binding site for ATP; sequence GESGAGKT. Lysine 442 carries the post-translational modification N6-acetyllysine. The segment at 661–683 is actin-binding; the sequence is LTKLMATLRNTNPNFVRCIIPNH. The region spanning 786-815 is the IQ domain; it reads ITDIIIFFQAVCRGYLARKAFAKKQQQLSA. A coiled-coil region spans residues 845–1976; sequence LQVTRQEEEL…INETQPPQSE (1132 aa). Residues 1126–1149 are disordered; that stretch reads DFESEKASRNKAEKQKRDLSEELE. Positions 1129 to 1149 are enriched in basic and acidic residues; sequence SEKASRNKAEKQKRDLSEELE. Serine 1145 is modified (phosphoserine). An N6-acetyllysine mark is found at lysine 1241, lysine 1301, and lysine 1645. 2 disordered regions span residues 1697–1718 and 1874–1976; these read ASSE…DEIA and KANA…PQSE. Basic and acidic residues predominate over residues 1698 to 1708; sequence SSERARRHAEQ. Omega-N-methylarginine is present on arginine 1930. Phosphoserine is present on residues serine 1935, serine 1937, serine 1938, and serine 1939. Position 1940 is an omega-N-methylarginine (arginine 1940). Serine 1952 and serine 1956 each carry phosphoserine. Residue threonine 1960 is modified to Phosphothreonine. Residues 1967–1976 show a composition bias toward polar residues; it reads INETQPPQSE. A Phosphoserine modification is found at serine 1975.

It belongs to the TRAFAC class myosin-kinesin ATPase superfamily. Myosin family. As to quaternary structure, myosin is a hexameric protein that consists of 2 heavy chain subunits (MHC), 2 alkali light chain subunits (MLC) and 2 regulatory light chain subunits (MLC-2). Interacts with PLEKHG6. Interacts with ECPAS. Interacts with KIF26B. Interacts with LARP6. Interacts with MCC. Interacts with CFAP95. Post-translationally, phosphorylated by ABL2.

The protein resides in the cell projection. It is found in the lamellipodium. Its function is as follows. Cellular myosin that appears to play a role in cytokinesis, cell shape, and specialized functions such as secretion and capping. Involved with LARP6 in the stabilization of type I collagen mRNAs for CO1A1 and CO1A2. During cell spreading, plays an important role in cytoskeleton reorganization, focal contacts formation (in the central part but not the margins of spreading cells), and lamellipodial extension; this function is mechanically antagonized by MYH9. This is Myosin-10 (MYH10) from Bos taurus (Bovine).